Here is a 545-residue protein sequence, read N- to C-terminus: Cleavage and polyadenylation specificity factor subunit 6 (545 aa).

Residues 37–69 (ISPSANNGDAPEDRDYLDSLPAPGGNEGSKGAP) form a disordered region. The RRM domain occupies 81-161 (IALYIGNLTW…QNPIVTPCNK (81 aa)). Residues 165–180 (SQFEMQSRKSTQSGQM) are compositionally biased toward polar residues. Disordered regions lie at residues 165-404 (SQFE…PLSE) and 478-545 (YGSV…YRHR). Positions 184-200 (GKAGPPGSGSRGGGFPP) are enriched in gly residues. 4 stretches are compositionally biased toward pro residues: residues 220–230 (PVGPGGPPPHF), 237–265 (PRLP…PLGG), 287–363 (PMGP…PPGN), and 372–383 (GPPPGDPYGRPP). 2 stretches are compositionally biased toward basic and acidic residues: residues 384–397 (PYDR…DMDA) and 483–497 (GRRE…SRSR). The span at 498–508 (EKSRRHKSRSR) shows a compositional bias: basic residues. Basic and acidic residues predominate over residues 509–545 (DRHEDYYRERSRERDRHRERDRDRERDREREREYRHR).

The protein belongs to the RRM CPSF6/7 family. Component of the cleavage factor Im (CFIm) complex.

It is found in the nucleus. Its subcellular location is the nucleoplasm. The protein localises to the nucleus speckle. The protein resides in the cytoplasm. Its function is as follows. Component of the cleavage factor Im (CFIm) complex that functions as an activator of the pre-mRNA 3'-end cleavage and polyadenylation processing required for the maturation of pre-mRNA into functional mRNAs. CFIm contributes to the recruitment of multiprotein complexes on specific sequences on the pre-mRNA 3'-end, so called cleavage and polyadenylation signals (pA signals). Most pre-mRNAs contain multiple pA signals, resulting in alternative cleavage and polyadenylation (APA) producing mRNAs with variable 3'-end formation. The CFIm complex acts as a key regulator of cleavage and polyadenylation site choice during APA through its binding to 5'-UGUA-3' elements localized in the 3'-untranslated region (UTR) for a huge number of pre-mRNAs. Plays a role in mRNA export. The protein is Cleavage and polyadenylation specificity factor subunit 6 of Danio rerio (Zebrafish).